Reading from the N-terminus, the 516-residue chain is Homeobox protein 6 (516 aa).

Over residues 22-31 (NYDFDNKNNS) the composition is skewed to low complexity. Disordered stretches follow at residues 22–140 (NYDF…PNCN), 200–256 (SLNN…SSPS), and 268–348 (DEND…NNGD). The segment covering 32-41 (IGGGGGGGGS) has biased composition (gly residues). Composition is skewed to low complexity over residues 42–59 (SSSR…SSSG), 66–78 (SNSS…IINS), and 101–132 (TTTT…NSSS). Positions 284 to 346 (NNNNNNNNNN…NNNNTNTNNN (63 aa)) are enriched in low complexity. DNA-binding regions (homeobox) lie at residues 362-421 (KSGQ…SKSG) and 424-483 (SYAK…NKLS). The interval 483 to 516 (SSKAIQDKDNQDNDNNNSNNNENNDDSYSDEGLF) is disordered. Over residues 495-504 (NDNNNSNNNE) the composition is skewed to low complexity. The segment covering 505 to 516 (NNDDSYSDEGLF) has biased composition (acidic residues).

It localises to the nucleus. In terms of biological role, putative transcription factor. This is Homeobox protein 6 (hbx6) from Dictyostelium discoideum (Social amoeba).